The following is a 341-amino-acid chain: DNA-directed RNA polymerase subunit alpha (341 aa).

Positions 1-237 (MLSLSKNWNA…EQLQLFISFE (237 aa)) are alpha N-terminal domain (alpha-NTD). Residues 247–341 (TDALPFSPYL…LSKRYEDSYN (95 aa)) form an alpha C-terminal domain (alpha-CTD) region.

This sequence belongs to the RNA polymerase alpha chain family. As to quaternary structure, homodimer. The RNAP catalytic core consists of 2 alpha, 1 beta, 1 beta' and 1 omega subunit. When a sigma factor is associated with the core the holoenzyme is formed, which can initiate transcription.

It carries out the reaction RNA(n) + a ribonucleoside 5'-triphosphate = RNA(n+1) + diphosphate. Its function is as follows. DNA-dependent RNA polymerase catalyzes the transcription of DNA into RNA using the four ribonucleoside triphosphates as substrates. The protein is DNA-directed RNA polymerase subunit alpha of Rickettsia bellii (strain RML369-C).